Reading from the N-terminus, the 184-residue chain is Leucine-rich repeat-containing protein 20 (184 aa).

5 LRR repeats span residues 51–72 (QIHL…FMTT), 75–96 (QLRE…VSAL), 98–120 (HLKA…TALP), 121–141 (ALET…EKLA), and 145–167 (ALRS…APPL). S175 carries the phosphoserine modification.

The protein is Leucine-rich repeat-containing protein 20 (LRRC20) of Homo sapiens (Human).